The primary structure comprises 198 residues: V-type ATP synthase subunit E (198 aa).

Belongs to the V-ATPase E subunit family.

Produces ATP from ADP in the presence of a proton gradient across the membrane. The sequence is that of V-type ATP synthase subunit E from Acetivibrio thermocellus (strain ATCC 27405 / DSM 1237 / JCM 9322 / NBRC 103400 / NCIMB 10682 / NRRL B-4536 / VPI 7372) (Clostridium thermocellum).